The sequence spans 568 residues: Polyprotein P2A (568 aa).

The next 2 membrane-spanning stretches (helical) occupy residues 10 to 30 and 41 to 61; these read KSVM…ISVA and TLIC…CAVC. Residues 129–326 form the Peptidase S39 domain; sequence VENSRLQPLE…TVENSELYPD (198 aa). Catalysis depends on for protease activity residues histidine 176, aspartate 209, and serine 276. The residue at position 339 (threonine 339) is a Phosphothreonine; by host. Serine 390 is modified (phosphoserine; by host). Disordered stretches follow at residues 403 to 435 and 469 to 568; these read LNYQ…ESSI and SSQN…ATSK. 2 stretches are compositionally biased toward polar residues: residues 419-435 and 469-478; these read NLSS…ESSI and SSQNSKSSLG. Residues 481–502 are compositionally biased toward basic and acidic residues; the sequence is ADRKQKSDRSSSKPEGLKESKR. The span at 507–516 shows a compositional bias: polar residues; the sequence is NWQSLTSKPS. The span at 539-549 shows a compositional bias: basic residues; the sequence is KSKRSRTRGKS. Residues 554–568 show a composition bias toward polar residues; it reads VPASPSPKSGSATSK.

The protein resides in the host membrane. In terms of biological role, responsible for cleavages of polyprotein P2A and replicase polyprotein P2AB. Covalently attached to the 5' extremity of the genomic and subgenomic RNAs. It may serve as a primer for the replicase. This is Polyprotein P2A from Cocksfoot mottle virus (isolate Dactylis glomerata/Norway/CfMV-NO/1995) (CfMV).